A 203-amino-acid polypeptide reads, in one-letter code: Probable nicotinate-nucleotide adenylyltransferase (203 aa).

It belongs to the NadD family.

The enzyme catalyses nicotinate beta-D-ribonucleotide + ATP + H(+) = deamido-NAD(+) + diphosphate. It participates in cofactor biosynthesis; NAD(+) biosynthesis; deamido-NAD(+) from nicotinate D-ribonucleotide: step 1/1. Functionally, catalyzes the reversible adenylation of nicotinate mononucleotide (NaMN) to nicotinic acid adenine dinucleotide (NaAD). The polypeptide is Probable nicotinate-nucleotide adenylyltransferase (Clostridium kluyveri (strain ATCC 8527 / DSM 555 / NBRC 12016 / NCIMB 10680 / K1)).